The sequence spans 503 residues: ATP synthase subunit alpha (503 aa).

Position 170–177 (170–177) interacts with ATP; sequence GDRQTGKT.

Belongs to the ATPase alpha/beta chains family. F-type ATPases have 2 components, CF(1) - the catalytic core - and CF(0) - the membrane proton channel. CF(1) has five subunits: alpha(3), beta(3), gamma(1), delta(1), epsilon(1). CF(0) has three main subunits: a(1), b(2) and c(9-12). The alpha and beta chains form an alternating ring which encloses part of the gamma chain. CF(1) is attached to CF(0) by a central stalk formed by the gamma and epsilon chains, while a peripheral stalk is formed by the delta and b chains.

The protein localises to the cell inner membrane. The enzyme catalyses ATP + H2O + 4 H(+)(in) = ADP + phosphate + 5 H(+)(out). Produces ATP from ADP in the presence of a proton gradient across the membrane. The alpha chain is a regulatory subunit. The protein is ATP synthase subunit alpha of Thermotoga neapolitana (strain ATCC 49049 / DSM 4359 / NBRC 107923 / NS-E).